The chain runs to 65 residues: MKKDIHPAYQQIDVHCVCGNKFKTGSTNKEIRVEVCSDCHPFYTGKQKSVEKGGRVEKFKKKFGM.

Residues Cys16, Cys18, Cys36, and Cys39 each coordinate Zn(2+).

This sequence belongs to the bacterial ribosomal protein bL31 family. Type A subfamily. In terms of assembly, part of the 50S ribosomal subunit. The cofactor is Zn(2+).

Its function is as follows. Binds the 23S rRNA. This Alkaliphilus metalliredigens (strain QYMF) protein is Large ribosomal subunit protein bL31.